The chain runs to 231 residues: MKISPSLMCMDLLKFKEQIEFIDSHADYFHIDIMDGHFVPNLTLSPFFVSQVKKLATKPLDCHLMVTRPQDYIAQLARAGADFITLHPETINGQAFRLIDEIRRHDMKVGLILNPETPVEAMKYYIHKADKITVMTVDPGFAGQPFIPEMLDKLAELKAWREREGLEYEIEVDGSCNQATYEKLMAAGADVFIVGTSGLFNHAENIDEAWRIMTAQILAAKSEVQPHAKTA.

S6 is a binding site for substrate. Positions 30, 32, and 63 each coordinate a divalent metal cation. D32 acts as the Proton acceptor in catalysis. Substrate contacts are provided by residues H63, 140–143 (GFAG), 173–175 (DGS), and 195–197 (GTS). D173 lines the a divalent metal cation pocket. D173 functions as the Proton donor in the catalytic mechanism.

The protein belongs to the ribulose-phosphate 3-epimerase family. AlsE subfamily. In terms of assembly, homohexamer. Trimer of dimers. Requires Co(2+) as cofactor. Mn(2+) serves as cofactor. It depends on Zn(2+) as a cofactor.

It catalyses the reaction D-allulose 6-phosphate = keto-D-fructose 6-phosphate. Its pathway is carbohydrate degradation; D-allose degradation. Functionally, catalyzes the reversible epimerization of D-allulose 6-phosphate to D-fructose 6-phosphate. Can also catalyze with lower efficiency the reversible epimerization of D-ribulose 5-phosphate to D-xylulose 5-phosphate. The chain is D-allulose-6-phosphate 3-epimerase from Escherichia coli (strain K12).